A 315-amino-acid polypeptide reads, in one-letter code: MMIGENKNRPHPTIHIPQWDQINDPTATISSPFSSVNLNSVNDYPHSPSPYLDSFASLFRYLPSNELTNDSDSSSGDESSPLTDSFSSDEFRIYEFKIRRCARGRSHDWTECPFAHPGEKARRRDPRKFHYSGTACPEFRKGSCRRGDSCEFSHGVFECWLHPSRYRTQPCKDGTSCRRRICFFAHTTEQLRVLPCSLDPDLGFFSGLATSPTSILVSPSFSPPSESPPLSPSTGELIASMRKMQLNGGGCSWSSPMRSAVRLPFSSSLRPIQAATWPRIREFEIEEAPAMEFVESGKELRAEMYARLSRENSLG.

Positions 1 to 21 (MMIGENKNRPHPTIHIPQWDQ) are disordered. C3H1-type zinc fingers lie at residues 131–157 (YSGT…HGVF) and 165–189 (RYRT…HTTE).

In Arabidopsis thaliana (Mouse-ear cress), this protein is Zinc finger CCCH domain-containing protein 23.